A 259-amino-acid chain; its full sequence is Global transcriptional regulator CodY (259 aa).

The tract at residues 1 to 155 (MNLLEKTRKI…GATVVGMEIL (155 aa)) is GAF domain. The segment at residues 203–222 (ASKIADRVGITRSVIVNALR) is a DNA-binding region (H-T-H motif). S215 is subject to Phosphoserine.

It belongs to the CodY family.

It localises to the cytoplasm. DNA-binding global transcriptional regulator which is involved in the adaptive response to starvation and acts by directly or indirectly controlling the expression of numerous genes in response to nutrient availability. During rapid exponential growth, CodY is highly active and represses genes whose products allow adaptation to nutrient depletion. This chain is Global transcriptional regulator CodY, found in Geobacillus kaustophilus (strain HTA426).